Here is a 452-residue protein sequence, read N- to C-terminus: Probable ECA polymerase (452 aa).

11 helical membrane passes run 6-26 (FSGL…LTWF), 37-57 (VFFS…TSVL), 63-83 (VGVA…CFYG), 118-138 (VILM…NGFL), 155-175 (GVAL…VYFL), 181-201 (AWLF…MIVG), 207-227 (IIIA…ISLW), 228-248 (MLAA…LKRY), 341-361 (LVVM…GLII), 378-398 (YKAA…IVLA), and 410-430 (VFFL…FWLF).

This sequence belongs to the WzyE family. In terms of assembly, probably part of a complex composed of WzxE, WzyE and WzzE.

Its subcellular location is the cell inner membrane. Its pathway is bacterial outer membrane biogenesis; enterobacterial common antigen biosynthesis. In terms of biological role, probably involved in the polymerization of enterobacterial common antigen (ECA) trisaccharide repeat units. This Salmonella arizonae (strain ATCC BAA-731 / CDC346-86 / RSK2980) protein is Probable ECA polymerase.